The following is a 158-amino-acid chain: Snaclec jerdonuxin subunit alpha (158 aa).

A signal peptide spans 1–23; that stretch reads MGRFTFVSFGLLVVFLSLSGTGA. 3 disulfide bridges follow: C27–C38, C55–C152, and C127–C144. Positions 34–153 constitute a C-type lectin domain; it reads YDRYCYQAFS…CGTENPFVCK (120 aa).

It belongs to the snaclec family. In terms of assembly, tetramer of 4 heterodimers of alpha and beta subunits; disulfide-linked. As to expression, expressed by the venom gland.

Its subcellular location is the secreted. In terms of biological role, snaclec that strongly induces platelet aggregation, in a dose-dependent manner. The chain is Snaclec jerdonuxin subunit alpha from Protobothrops jerdonii (Jerdon's pitviper).